The chain runs to 42 residues: Photosystem II reaction center protein J (42 aa).

A helical transmembrane segment spans residues 10–30 (IPLWLVGTVAGTAAIGLLGIF).

Belongs to the PsbJ family. PSII is composed of 1 copy each of membrane proteins PsbA, PsbB, PsbC, PsbD, PsbE, PsbF, PsbH, PsbI, PsbJ, PsbK, PsbL, PsbM, PsbT, PsbX, PsbY, PsbZ, Psb30/Ycf12, at least 3 peripheral proteins of the oxygen-evolving complex and a large number of cofactors. It forms dimeric complexes.

The protein localises to the plastid. It is found in the chloroplast thylakoid membrane. In terms of biological role, one of the components of the core complex of photosystem II (PSII). PSII is a light-driven water:plastoquinone oxidoreductase that uses light energy to abstract electrons from H(2)O, generating O(2) and a proton gradient subsequently used for ATP formation. It consists of a core antenna complex that captures photons, and an electron transfer chain that converts photonic excitation into a charge separation. The protein is Photosystem II reaction center protein J of Pleurastrum terricola (Filamentous green alga).